Here is a 254-residue protein sequence, read N- to C-terminus: AA9 family lytic polysaccharide monooxygenase A (254 aa).

A signal peptide spans 1–19 (MKYSILGLTALSFVASAAA). Histidine 20 contributes to the Cu(2+) binding site. Histidine 20 carries the post-translational modification Methylhistidine. Residue valine 28 participates in (1,4-beta-D-glucosyl)n binding. Asparagine 52 carries N-linked (GlcNAc...) asparagine glycosylation. Cysteines 60 and 186 form a disulfide. (1,4-beta-D-glucosyl)n contacts are provided by valine 66, valine 67, aspartate 77, and asparagine 86. A Cu(2+)-binding site is contributed by histidine 97. N-linked (GlcNAc...) asparagine glycosylation occurs at asparagine 129. (1,4-beta-D-glucosyl)n contacts are provided by valine 148 and arginine 159. Residues histidine 166 and glutamine 181 each contribute to the O2 site. Tyrosine 183 contacts Cu(2+).

Belongs to the polysaccharide monooxygenase AA9 family. It depends on Cu(2+) as a cofactor. In terms of processing, the catalytically essential N-terminal histidine His-20 is post-translationally modified by methylation to prevent protonation of the histidine side chain, and protect the critical active site of the enzyme from oxidative damage.

It is found in the secreted. It carries out the reaction [(1-&gt;4)-beta-D-glucosyl]n+m + reduced acceptor + O2 = 4-dehydro-beta-D-glucosyl-[(1-&gt;4)-beta-D-glucosyl]n-1 + [(1-&gt;4)-beta-D-glucosyl]m + acceptor + H2O.. The polyphenol cinnamtannin B1 contained in methanolic extract of Cinnamomum cassia (cinnamon) acts as an inhibitor of catalytic activity. Its function is as follows. Lytic polysaccharide monooxygenase (LPMO) that depolymerizes crystalline and amorphous polysaccharides via the oxidation of scissile alpha- or beta-(1-4)-glycosidic bonds, yielding C1 or C4 oxidation product. Catalysis by LPMOs requires the reduction of the active-site copper from Cu(II) to Cu(I) by a reducing agent and H(2)O(2) or O(2) as a cosubstrate. Is able to cleave phosphoric acid swollen cellulose (PASC) in the presence of a reducing agent, yielding a range of cellooligosaccharides dominated by cellobiose and cellotriose. Activity is less sensitive to the reducing agent potential when cleaving xylan, suggesting that distinct catalytic mechanisms exist for xylan and glucan cleavage. This Panus similis (Lentinoid fungus) protein is AA9 family lytic polysaccharide monooxygenase A.